Consider the following 424-residue polypeptide: UDP-N-acetylglucosamine 1-carboxyvinyltransferase (424 aa).

22–23 contributes to the phosphoenolpyruvate binding site; sequence KN. Arginine 93 is a binding site for UDP-N-acetyl-alpha-D-glucosamine. The active-site Proton donor is cysteine 117. Position 117 is a 2-(S-cysteinyl)pyruvic acid O-phosphothioketal (cysteine 117). UDP-N-acetyl-alpha-D-glucosamine-binding positions include 122 to 126, 162 to 165, aspartate 307, and isoleucine 329; these read RPVDL and KVSV.

The protein belongs to the EPSP synthase family. MurA subfamily.

It localises to the cytoplasm. It catalyses the reaction phosphoenolpyruvate + UDP-N-acetyl-alpha-D-glucosamine = UDP-N-acetyl-3-O-(1-carboxyvinyl)-alpha-D-glucosamine + phosphate. The protein operates within cell wall biogenesis; peptidoglycan biosynthesis. In terms of biological role, cell wall formation. Adds enolpyruvyl to UDP-N-acetylglucosamine. In Histophilus somni (strain 129Pt) (Haemophilus somnus), this protein is UDP-N-acetylglucosamine 1-carboxyvinyltransferase.